A 480-amino-acid polypeptide reads, in one-letter code: Putative auxin transporter-like protein 4 (480 aa).

Residues 1–66 lie on the Cytoplasmic side of the membrane; that stretch reads MASEKVETIV…DAWFSCASNQ (66 aa). The helical transmembrane segment at 67–84 threads the bilayer; it reads VAQVLLTLPYSFSQLGMA. The Extracellular portion of the chain corresponds to 85–86; the sequence is SG. Residues 87–107 traverse the membrane as a helical segment; it reads VAFQVFYGLMGSWTAYLISVL. Topologically, residues 108 to 143 are cytoplasmic; the sequence is YVEYRTRRERDKVDFRNHVIQWFEVLDGLLGRHWRN. The chain crosses the membrane as a helical span at residues 144–164; the sequence is AGLLFNCTFLLFGSVIQLIAC. Over 165–179 the chain is Extracellular; the sequence is ASNIYYINDRLDKRT. Residues 180 to 200 traverse the membrane as a helical segment; the sequence is WTYIFGACCATTVFVPSFHNY. Residues 201–203 are Cytoplasmic-facing; sequence RVW. A helical membrane pass occupies residues 204–224; it reads SFLGLLMTSYTAWYLTVAAVV. Residues 225 to 241 lie on the Extracellular side of the membrane; the sequence is HGKVDGAAPRAGPSKTM. A helical membrane pass occupies residues 242–262; sequence VLYFTGATNILYTFGGHAVTV. The Cytoplasmic portion of the chain corresponds to 263–275; it reads EIMHAMWRPRRFK. Residues 276–296 traverse the membrane as a helical segment; that stretch reads MIYLAATAYVLTLTLPSAAAM. Over 297 to 323 the chain is Extracellular; it reads YWAFGDALLDHSNAFALLPRTPWRDAA. The helical transmembrane segment at 324–344 threads the bilayer; it reads VVLMLIHQFITFGFACTPLYF. The Cytoplasmic portion of the chain corresponds to 345–365; sequence VWEKAIGVHGGAGVLRRAAAR. Residues 366-386 traverse the membrane as a helical segment; sequence LPVVLPIWFLAVIFPFFGPIN. A topological domain (extracellular) is located at residue S387. A helical membrane pass occupies residues 388 to 408; the sequence is TVGSFLVSFTVYIIPAMAHMA. Residues 409 to 433 are Cytoplasmic-facing; that stretch reads TFAPAAARENAVEPPPRALGGWPGT. The helical transmembrane segment at 434 to 454 threads the bilayer; it reads FAANCFVVAWVLVVGFGFGGW. Over 455–480 the chain is Extracellular; that stretch reads ASTVNFVRQVDTFGLFTKCYQCPPRH.

The protein belongs to the amino acid/polyamine transporter 2 family. Amino acid/auxin permease (AAAP) (TC 2.A.18.1) subfamily.

It is found in the cell membrane. Functionally, carrier protein involved in proton-driven auxin influx. May mediate the formation of auxin gradient from developing leaves (site of auxin biosynthesis) to tips. The chain is Putative auxin transporter-like protein 4 from Oryza sativa subsp. japonica (Rice).